We begin with the raw amino-acid sequence, 471 residues long: Trigger factor (471 aa).

The region spanning 169-264 (GDVAVVDFKG…LKEIKEKELP (96 aa)) is the PPIase FKBP-type domain.

The protein belongs to the FKBP-type PPIase family. Tig subfamily.

Its subcellular location is the cytoplasm. The enzyme catalyses [protein]-peptidylproline (omega=180) = [protein]-peptidylproline (omega=0). Its function is as follows. Involved in protein export. Acts as a chaperone by maintaining the newly synthesized protein in an open conformation. Functions as a peptidyl-prolyl cis-trans isomerase. This chain is Trigger factor, found in Nostoc sp. (strain PCC 7120 / SAG 25.82 / UTEX 2576).